The sequence spans 438 residues: 23S rRNA (uracil(1939)-C(5))-methyltransferase RlmD (438 aa).

One can recognise a TRAM domain in the interval 10-68; sequence KTKNVQTITADILDLDYQGLGVAKINGKTWFIENALPHEKVECRILEDKRQYGHAIVKK. Cys81, Cys87, Cys90, and Cys168 together coordinate [4Fe-4S] cluster. Positions 271, 300, 305, 321, 348, and 369 each coordinate S-adenosyl-L-methionine. Cys395 acts as the Nucleophile in catalysis.

The protein belongs to the class I-like SAM-binding methyltransferase superfamily. RNA M5U methyltransferase family. RlmD subfamily.

The enzyme catalyses uridine(1939) in 23S rRNA + S-adenosyl-L-methionine = 5-methyluridine(1939) in 23S rRNA + S-adenosyl-L-homocysteine + H(+). In terms of biological role, catalyzes the formation of 5-methyl-uridine at position 1939 (m5U1939) in 23S rRNA. The polypeptide is 23S rRNA (uracil(1939)-C(5))-methyltransferase RlmD (Haemophilus influenzae (strain ATCC 51907 / DSM 11121 / KW20 / Rd)).